Here is a 362-residue protein sequence, read N- to C-terminus: Carbamoyl phosphate synthase pyrimidine-specific small chain (362 aa).

The interval 1–168 is CPSase; that stretch reads MKRQLILEDG…TRDPYHVPGP (168 aa). Residues Ser45, Gly219, and Gly221 each coordinate L-glutamine. The Glutamine amidotransferase type-1 domain maps to 171 to 358; it reads RVVLVDYGMK…IKLMESNKHR (188 aa). Cys246 functions as the Nucleophile in the catalytic mechanism. Leu247, Gln250, Asn288, Gly290, and Tyr291 together coordinate L-glutamine. Residues His331 and Glu333 contribute to the active site.

The protein belongs to the CarA family. Composed of two chains; the small (or glutamine) chain promotes the hydrolysis of glutamine to ammonia, which is used by the large (or ammonia) chain to synthesize carbamoyl phosphate. Tetramer of heterodimers (alpha,beta)4.

The catalysed reaction is hydrogencarbonate + L-glutamine + 2 ATP + H2O = carbamoyl phosphate + L-glutamate + 2 ADP + phosphate + 2 H(+). It catalyses the reaction L-glutamine + H2O = L-glutamate + NH4(+). It functions in the pathway pyrimidine metabolism; UMP biosynthesis via de novo pathway; (S)-dihydroorotate from bicarbonate: step 1/3. In terms of biological role, small subunit of the glutamine-dependent carbamoyl phosphate synthetase (CPSase). CPSase catalyzes the formation of carbamoyl phosphate from the ammonia moiety of glutamine, carbonate, and phosphate donated by ATP, constituting the first step of the biosynthetic pathway leading to pyrimidine nucleotides. The small subunit (glutamine amidotransferase) binds and cleaves glutamine to supply the large subunit with the substrate ammonia. The protein is Carbamoyl phosphate synthase pyrimidine-specific small chain of Halalkalibacterium halodurans (strain ATCC BAA-125 / DSM 18197 / FERM 7344 / JCM 9153 / C-125) (Bacillus halodurans).